The following is a 546-amino-acid chain: Alkaline phosphatase PafA (546 aa).

An N-terminal signal peptide occupies residues Met-1–Ala-25. The Zn(2+) site is built by Asp-38 and Thr-79. Residue Thr-79 is the Phosphothreonine intermediate of the active site. Substrate-binding positions include Asn-100 and Lys-162–Arg-164. Residues Asp-305, His-309, Asp-352, His-353, and His-486 each contribute to the Zn(2+) site.

The cofactor is Zn(2+).

The protein localises to the periplasm. The enzyme catalyses a phosphate monoester + H2O = an alcohol + phosphate. Its activity is regulated as follows. Strongly inhibited by orthovanadate and EDTA. Also inhibited by inorganic phosphate. Alkaline phosphatase with broad substrate specificity. Has phosphatase activity towards nucleotide phosphates with a preference for ATP. Active towards a great variety of phosphomonoesters with the exception of 2',3'-cyclic AMP and myo-inositol hexakisphosphate. The polypeptide is Alkaline phosphatase PafA (Elizabethkingia meningoseptica (Chryseobacterium meningosepticum)).